The following is a 265-amino-acid chain: Protein B8 (265 aa).

This is Protein B8 (B8) from Homo sapiens (Human).